The following is a 286-amino-acid chain: uncharacterized protein (286 aa).

The next 6 helical transmembrane spans lie at 52 to 74 (ILWT…LIGL), 79 to 101 (LIAI…FLFL), 142 to 161 (WWDP…VSFF), 168 to 190 (VLVF…GAIL), 203 to 225 (IQAT…VALV), and 257 to 276 (IIWI…ASFM).

Its subcellular location is the cell membrane. This is an uncharacterized protein from Archaeoglobus fulgidus (strain ATCC 49558 / DSM 4304 / JCM 9628 / NBRC 100126 / VC-16).